A 345-amino-acid chain; its full sequence is Ubiquinone biosynthesis O-methyltransferase, mitochondrial (345 aa).

The N-terminal 86 residues, 1–86 (MWRGGRLSSR…TYRSSWKKLY (86 aa)), are a transit peptide targeting the mitochondrion. Arg-124 is an S-adenosyl-L-methionine binding site. An N6-acetyllysine mark is found at Lys-143 and Lys-149. Gly-154 and Asp-175 together coordinate S-adenosyl-L-methionine. Residue Lys-196 is modified to N6-acetyllysine. Ser-222 contributes to the S-adenosyl-L-methionine binding site. Mg(2+) contacts are provided by Glu-223, Glu-226, and His-227.

Belongs to the class I-like SAM-binding methyltransferase superfamily. UbiG/COQ3 family. In terms of assembly, component of a multi-subunit COQ enzyme complex, composed of at least COQ3, COQ4, COQ5, COQ6, COQ7 and COQ9. Mg(2+) is required as a cofactor.

The protein localises to the mitochondrion inner membrane. The catalysed reaction is 3,4-dihydroxy-5-(all-trans-decaprenyl)benzoate + S-adenosyl-L-methionine = 4-hydroxy-3-methoxy-5-(all-trans-decaprenyl)benzoate + S-adenosyl-L-homocysteine + H(+). It catalyses the reaction a 3-demethylubiquinone + S-adenosyl-L-methionine = a ubiquinone + S-adenosyl-L-homocysteine. It carries out the reaction 3-demethylubiquinol-10 + S-adenosyl-L-methionine = ubiquinol-10 + S-adenosyl-L-homocysteine + H(+). It participates in cofactor biosynthesis; ubiquinone biosynthesis. In terms of biological role, O-methyltransferase required for two non-consecutive steps during ubiquinone biosynthesis. Catalyzes the 2 O-methylation of 3,4-dihydroxy-5-(all-trans-decaprenyl)benzoic acid into 4-hydroxy-3-methoxy-5-(all-trans-decaprenyl)benzoic acid. Also catalyzes the last step of ubiquinone biosynthesis by mediating methylation of 3-demethylubiquinone into ubiquinone. Also able to mediate the methylation of 3-demethylubiquinol-10 into ubiquinol-10. The chain is Ubiquinone biosynthesis O-methyltransferase, mitochondrial from Rattus norvegicus (Rat).